The chain runs to 283 residues: Probable endonuclease 4 (283 aa).

Residues His69, His109, Glu145, Asp179, His182, His216, Asp229, His231, and Glu261 each coordinate Zn(2+).

The protein belongs to the AP endonuclease 2 family. It depends on Zn(2+) as a cofactor.

The catalysed reaction is Endonucleolytic cleavage to 5'-phosphooligonucleotide end-products.. Its function is as follows. Endonuclease IV plays a role in DNA repair. It cleaves phosphodiester bonds at apurinic or apyrimidinic (AP) sites, generating a 3'-hydroxyl group and a 5'-terminal sugar phosphate. This chain is Probable endonuclease 4, found in Campylobacter curvus (strain 525.92).